A 328-amino-acid chain; its full sequence is Malate dehydrogenase (328 aa).

Position 12–18 (12–18 (GAAGQIG)) interacts with NAD(+). The substrate site is built by R93 and R99. NAD(+) is bound by residues N106, Q113, and 130-132 (TGN). The substrate site is built by N132 and R163. H188 functions as the Proton acceptor in the catalytic mechanism.

It belongs to the LDH/MDH superfamily. MDH type 2 family.

The enzyme catalyses (S)-malate + NAD(+) = oxaloacetate + NADH + H(+). Catalyzes the reversible oxidation of malate to oxaloacetate. This Kocuria rhizophila (strain ATCC 9341 / DSM 348 / NBRC 103217 / DC2201) protein is Malate dehydrogenase.